We begin with the raw amino-acid sequence, 1203 residues long: ATP-dependent helicase/nuclease subunit A (1203 aa).

Residues 4–472 (VKLTPEQNEA…IRLKENFRSR (469 aa)) enclose the UvrD-like helicase ATP-binding domain. ATP is bound at residue 25–32 (ASAGSGKT). One can recognise a UvrD-like helicase C-terminal domain in the interval 503–785 (VQGNISDYPV…RVMTFHKSKG (283 aa)).

This sequence belongs to the helicase family. AddA subfamily. As to quaternary structure, heterodimer of AddA and AddB/RexB. Mg(2+) is required as a cofactor.

The catalysed reaction is Couples ATP hydrolysis with the unwinding of duplex DNA by translocating in the 3'-5' direction.. The enzyme catalyses ATP + H2O = ADP + phosphate + H(+). The heterodimer acts as both an ATP-dependent DNA helicase and an ATP-dependent, dual-direction single-stranded exonuclease. Recognizes the chi site generating a DNA molecule suitable for the initiation of homologous recombination. The AddA nuclease domain is required for chi fragment generation; this subunit has the helicase and 3' -&gt; 5' nuclease activities. The chain is ATP-dependent helicase/nuclease subunit A from Lactococcus lactis subsp. cremoris (strain SK11).